A 307-amino-acid chain; its full sequence is MAARSIASLSLSFGLVSIPVKLYSATESSSDVRFNLLAPDGSRVRQQYISESSGAVVERSSMKKGYEFEKDRFVVFTADELKALEESASHVVEIVAFIPEKSIDPVYYDKAYYIAPDRRGGKPYSLLQQALAESGRCALAKWASKGKTRIVQVRPSADGLVFQQLLFADEVRSMKDLNIEHVDVSASELKLAMQIIEQGTEDHYDPAAYEDEEKKRILAAIDRKIEGKQVISNERADVPAEGGEVIDLMEALRASLRGGAKAKPAAAPRRKAPEPVAGMAEATRARKPAARAPKSPAEAPAKVRARK.

The region spanning 11–179 (LSFGLVSIPV…EVRSMKDLNI (169 aa)) is the Ku domain. Low complexity-rich tracts occupy residues 257–267 (RGGAKAKPAAA) and 290–307 (ARAPKSPAEAPAKVRARK). The segment at 257–307 (RGGAKAKPAAAPRRKAPEPVAGMAEATRARKPAARAPKSPAEAPAKVRARK) is disordered.

Belongs to the prokaryotic Ku family. As to quaternary structure, homodimer. Interacts with LigD.

With LigD forms a non-homologous end joining (NHEJ) DNA repair enzyme, which repairs dsDNA breaks with reduced fidelity. Binds linear dsDNA with 5'- and 3'- overhangs but not closed circular dsDNA nor ssDNA. Recruits and stimulates the ligase activity of LigD. This chain is Non-homologous end joining protein Ku, found in Paraburkholderia phymatum (strain DSM 17167 / CIP 108236 / LMG 21445 / STM815) (Burkholderia phymatum).